The primary structure comprises 669 residues: DNA ligase (669 aa).

NAD(+) contacts are provided by residues Asp33–Asp37, Ser82–Leu83, and Glu115. Catalysis depends on Lys117, which acts as the N6-AMP-lysine intermediate. Residues Arg138, Glu172, Lys286, and Lys310 each coordinate NAD(+). The Zn(2+) site is built by Cys401, Cys404, Cys417, and Cys422. Residues Val589 to Asp669 enclose the BRCT domain.

This sequence belongs to the NAD-dependent DNA ligase family. LigA subfamily. Requires Mg(2+) as cofactor. Mn(2+) is required as a cofactor.

The catalysed reaction is NAD(+) + (deoxyribonucleotide)n-3'-hydroxyl + 5'-phospho-(deoxyribonucleotide)m = (deoxyribonucleotide)n+m + AMP + beta-nicotinamide D-nucleotide.. Its function is as follows. DNA ligase that catalyzes the formation of phosphodiester linkages between 5'-phosphoryl and 3'-hydroxyl groups in double-stranded DNA using NAD as a coenzyme and as the energy source for the reaction. It is essential for DNA replication and repair of damaged DNA. The protein is DNA ligase of Borrelia duttonii (strain Ly).